Consider the following 467-residue polypeptide: tRNA-2-methylthio-N(6)-dimethylallyladenosine synthase (467 aa).

A disordered region spans residues 1 to 20 (MSDDTTQIEPAMAQETSPRA). One can recognise an MTTase N-terminal domain in the interval 23–143 (RKVFVKTYGC…LPNALARVRG (121 aa)). Residues Cys-32, Cys-68, Cys-106, Cys-184, Cys-188, and Cys-191 each contribute to the [4Fe-4S] cluster site. Residues 170–402 (RKRGVSAFLT…QALLSAQQYA (233 aa)) form the Radical SAM core domain. Residues 405–467 (DSMIGRKMDV…TNSLIAQKLA (63 aa)) form the TRAM domain.

Belongs to the methylthiotransferase family. MiaB subfamily. Monomer. [4Fe-4S] cluster is required as a cofactor.

It is found in the cytoplasm. It carries out the reaction N(6)-dimethylallyladenosine(37) in tRNA + (sulfur carrier)-SH + AH2 + 2 S-adenosyl-L-methionine = 2-methylsulfanyl-N(6)-dimethylallyladenosine(37) in tRNA + (sulfur carrier)-H + 5'-deoxyadenosine + L-methionine + A + S-adenosyl-L-homocysteine + 2 H(+). Catalyzes the methylthiolation of N6-(dimethylallyl)adenosine (i(6)A), leading to the formation of 2-methylthio-N6-(dimethylallyl)adenosine (ms(2)i(6)A) at position 37 in tRNAs that read codons beginning with uridine. The sequence is that of tRNA-2-methylthio-N(6)-dimethylallyladenosine synthase from Brucella suis (strain ATCC 23445 / NCTC 10510).